The following is a 546-amino-acid chain: Phosphatidylinositol 4-phosphate 5-kinase type-1 alpha (546 aa).

The PIPK domain occupies 65-433 (TSSALKGAIQ…RFQRFMCNTV (369 aa)). Lysine 87 participates in a covalent cross-link: Glycyl lysine isopeptide (Lys-Gly) (interchain with G-Cter in ubiquitin). The tract at residues 441-522 (PSPTKKFRSG…PGPSFSPAVG (82 aa)) is disordered. Low complexity predominate over residues 449–461 (SGPSFSRRSGPSG). Residues 462–471 (NSCTPSQPTA) show a composition bias toward polar residues. Residues 473-493 (GEHKAQVTTKAEVEPDIHLGR) show a composition bias toward basic and acidic residues.

In terms of assembly, interacts with RAC1. Interacts with TUT1. Forms a complex with CDH1/E-cadherin, CTNNB1/beta-catenin and CTNND1 at the plasma membrane upon calcium stimulation. Found in a ternary complex with IRS1 and DGKZ in the absence of insulin stimulation. Interacts with DGKZ. Interacts with PIP4K2C; the interaction inhibits PIP5K1A kinase activity.

The protein localises to the cell membrane. It is found in the cytoplasm. The protein resides in the nucleus. Its subcellular location is the nucleus speckle. It localises to the cell projection. The protein localises to the ruffle. It is found in the lamellipodium. It carries out the reaction a 1,2-diacyl-sn-glycero-3-phospho-(1D-myo-inositol 4-phosphate) + ATP = a 1,2-diacyl-sn-glycero-3-phospho-(1D-myo-inositol-4,5-bisphosphate) + ADP + H(+). The enzyme catalyses 1-octadecanoyl-2-(5Z,8Z,11Z,14Z)-eicosatetraenoyl-sn-glycero-3-phospho-1D-myo-inositol 4-phosphate + ATP = 1-octadecanoyl-2-(5Z,8Z,11Z,14Z)-eicosatetraenoyl-sn-glycero-3-phospho-1D-myo-inositol 4,5-bisphosphate + ADP + H(+). The catalysed reaction is 1,2-dihexadecanoyl-sn-glycero-3-phospho-(1D-myo-inositol-4-phosphate) + ATP = 1,2-dihexadecanoyl-sn-glycero-3-phospho-(1D-myo-inositol-4,5-bisphosphate) + ADP + H(+). It catalyses the reaction 1-octadecanoyl-2-(9Z)-octadecenoyl-sn-glycero-3-phospho-1D-myo-inositol 4-phosphate + ATP = 1-octadecanoyl-2-(9Z)-octadecenoyl-sn-glycero-3-phospho-1D-myo-inositol 4,5-bisphosphate + ADP + H(+). It carries out the reaction 1-octadecanoyl-2-(9Z)-octadecenoyl-sn-glycero-3-phospho-1D-myo-inositol + ATP = 1-octadecanoyl-2-(9Z)-octadecenoyl-sn-glycero-3-phospho-1D-myo-inositol 5-phosphate + ADP + H(+). The enzyme catalyses 1-octadecanoyl-2-(9Z,12Z)-octadecadienoyl-sn-glycero-3-phospho-1D-myo-inositol + ATP = 1-octadecanoyl-2-(9Z,12Z)-octadecadienoyl-sn-glycero-3-phospho-1D-myo-inositol 5-phosphate + ADP + H(+). The catalysed reaction is 1-octadecanoyl-2-(5Z,8Z,11Z,14Z-eicosatetraenoyl)-sn-glycero-3-phospho-(1D-myo-inositol) + ATP = 1-octadecanoyl-2-(5Z,8Z,11Z,14Z)-eicosatetraenoyl-sn-glycero-3-phospho-1D-myo-inositol 5-phosphate + ADP + H(+). It catalyses the reaction 1,2-di-(9Z,12Z)-octadecadienoyl-sn-glycero-3-phospho-1D-myo-inositol + ATP = 1,2-di(9Z,12Z)-octadecadienoyl-sn-glycero-3-phospho-1D-myo-inositol 5-phosphate + ADP + H(+). Its function is as follows. Catalyzes the phosphorylation of phosphatidylinositol 4-phosphate (PtdIns(4)P/PI4P) to form phosphatidylinositol 4,5-bisphosphate (PtdIns(4,5)P2/PIP2), a lipid second messenger that regulates several cellular processes such as signal transduction, vesicle trafficking, actin cytoskeleton dynamics, cell adhesion, and cell motility. PtdIns(4,5)P2 can directly act as a second messenger or can be utilized as a precursor to generate other second messengers: inositol 1,4,5-trisphosphate (IP3), diacylglycerol (DAG) or phosphatidylinositol-3,4,5-trisphosphate (PtdIns(3,4,5)P3/PIP3). PIP5K1A-mediated phosphorylation of PtdIns(4)P is the predominant pathway for PtdIns(4,5)P2 synthesis. Can also use phosphatidylinositol (PtdIns) as substrate in vitro. Together with PIP5K1C, is required for phagocytosis, both enzymes regulating different types of actin remodeling at sequential steps. Promotes particle ingestion by activating the WAS GTPase-binding protein that induces Arp2/3 dependent actin polymerization at the nascent phagocytic cup. Together with PIP5K1B, is required, after stimulation by G-protein coupled receptors, for the synthesis of IP3 that will induce stable platelet adhesion. Recruited to the plasma membrane by the E-cadherin/beta-catenin complex where it provides the substrate PtdIns(4,5)P2 for the production of PtdIns(3,4,5)P3, IP3 and DAG, that will mobilize internal calcium and drive keratinocyte differentiation. Positively regulates insulin-induced translocation of SLC2A4 to the cell membrane in adipocytes. Together with PIP5K1C has a role during embryogenesis. Independently of its catalytic activity, is required for membrane ruffling formation, actin organization and focal adhesion formation during directional cell migration by controlling integrin-induced translocation of the small GTPase RAC1 to the plasma membrane. Also functions in the nucleus where it acts as an activator of TUT1 adenylyltransferase activity in nuclear speckles, thereby regulating mRNA polyadenylation of a select set of mRNAs. This chain is Phosphatidylinositol 4-phosphate 5-kinase type-1 alpha, found in Rattus norvegicus (Rat).